Reading from the N-terminus, the 451-residue chain is Bifunctional protein GlmU (451 aa).

Residues 1–229 (MQRHAIILAA…FDEIIGVNDR (229 aa)) are pyrophosphorylase. UDP-N-acetyl-alpha-D-glucosamine is bound by residues 8–11 (LAAG), Lys22, Gln72, and 77–78 (GT). Asp102 contacts Mg(2+). Residues Gly139, Glu154, and Asn227 each coordinate UDP-N-acetyl-alpha-D-glucosamine. Asn227 contacts Mg(2+). The segment at 230-250 (LMLSEAEKALQQRINRYHMEN) is linker. The interval 251 to 451 (GVTIIDPSST…QVNKEGYLKK (201 aa)) is N-acetyltransferase. The UDP-N-acetyl-alpha-D-glucosamine site is built by Arg332 and Lys350. His362 serves as the catalytic Proton acceptor. Residues Tyr365 and Asn376 each coordinate UDP-N-acetyl-alpha-D-glucosamine. Residues 385-386 (NY), Ala422, and Arg439 each bind acetyl-CoA.

This sequence in the N-terminal section; belongs to the N-acetylglucosamine-1-phosphate uridyltransferase family. The protein in the C-terminal section; belongs to the transferase hexapeptide repeat family. As to quaternary structure, homotrimer. Mg(2+) is required as a cofactor.

It is found in the cytoplasm. It catalyses the reaction alpha-D-glucosamine 1-phosphate + acetyl-CoA = N-acetyl-alpha-D-glucosamine 1-phosphate + CoA + H(+). It carries out the reaction N-acetyl-alpha-D-glucosamine 1-phosphate + UTP + H(+) = UDP-N-acetyl-alpha-D-glucosamine + diphosphate. It functions in the pathway nucleotide-sugar biosynthesis; UDP-N-acetyl-alpha-D-glucosamine biosynthesis; N-acetyl-alpha-D-glucosamine 1-phosphate from alpha-D-glucosamine 6-phosphate (route II): step 2/2. Its pathway is nucleotide-sugar biosynthesis; UDP-N-acetyl-alpha-D-glucosamine biosynthesis; UDP-N-acetyl-alpha-D-glucosamine from N-acetyl-alpha-D-glucosamine 1-phosphate: step 1/1. The protein operates within bacterial outer membrane biogenesis; LPS lipid A biosynthesis. In terms of biological role, catalyzes the last two sequential reactions in the de novo biosynthetic pathway for UDP-N-acetylglucosamine (UDP-GlcNAc). The C-terminal domain catalyzes the transfer of acetyl group from acetyl coenzyme A to glucosamine-1-phosphate (GlcN-1-P) to produce N-acetylglucosamine-1-phosphate (GlcNAc-1-P), which is converted into UDP-GlcNAc by the transfer of uridine 5-monophosphate (from uridine 5-triphosphate), a reaction catalyzed by the N-terminal domain. In Staphylococcus epidermidis, this protein is Bifunctional protein GlmU.